A 212-amino-acid chain; its full sequence is uncharacterized protein (212 aa).

A disordered region spans residues 42 to 101; sequence GITGPKATKSPSRRTTRSPSPSRRTTRSSPSRRTTRSSPSRRTTRSPSPSGRRKQGGPAV. Residues 58–91 are compositionally biased toward low complexity; it reads RSPSPSRRTTRSSPSRRTTRSSPSRRTTRSPSPS.

The protein belongs to the IIV-6 378R family.

This is an uncharacterized protein from Invertebrate iridescent virus 3 (IIV-3).